A 317-amino-acid chain; its full sequence is Protein-methionine-sulfoxide reductase catalytic subunit MsrP (317 aa).

The tat-type signal signal peptide spans 1-40 (MKKLTSNDVTPEEIFYQRRKIIKAFGLSAVATALPTFSFA). Residues Asn71, 74-75 (YE), Cys129, Thr164, Asn216, Arg221, and 232-234 (SIK) each bind Mo-molybdopterin.

It belongs to the MsrP family. In terms of assembly, heterodimer of a catalytic subunit (MsrP) and a heme-binding subunit (MsrQ). Mo-molybdopterin serves as cofactor. Predicted to be exported by the Tat system. The position of the signal peptide cleavage has not been experimentally proven.

Its subcellular location is the periplasm. It catalyses the reaction L-methionyl-[protein] + a quinone + H2O = L-methionyl-(S)-S-oxide-[protein] + a quinol. It carries out the reaction L-methionyl-[protein] + a quinone + H2O = L-methionyl-(R)-S-oxide-[protein] + a quinol. Part of the MsrPQ system that repairs oxidized periplasmic proteins containing methionine sulfoxide residues (Met-O), using respiratory chain electrons. Thus protects these proteins from oxidative-stress damage caused by reactive species of oxygen and chlorine generated by the host defense mechanisms. MsrPQ is essential for the maintenance of envelope integrity under bleach stress, rescuing a wide series of structurally unrelated periplasmic proteins from methionine oxidation. The catalytic subunit MsrP is non-stereospecific, being able to reduce both (R-) and (S-) diastereoisomers of methionine sulfoxide. This is Protein-methionine-sulfoxide reductase catalytic subunit MsrP from Histophilus somni (strain 2336) (Haemophilus somnus).